Here is a 380-residue protein sequence, read N- to C-terminus: Cytochrome b (380 aa).

A run of 4 helical transmembrane segments spans residues 34–54 (FGSLLGICLATQILTGLLLAA), 78–99 (WLIRNLHANGASFFFICIYLHI), 114–134 (WNTGVILLLTLMATAFVGYVL), and 179–199 (FFTLHFLLPFMIMGLTLIHLT). Heme b-binding residues include His-84 and His-98. Heme b contacts are provided by His-183 and His-197. His-202 contributes to the a ubiquinone binding site. 4 helical membrane passes run 227–247 (LKDILGFMLMLLPLMTLALFS), 289–309 (LGGVLALAASVLILFLAPLLH), 321–341 (LSQLLFWTLTANLLILTWVGS), and 348–368 (FMIIGQLASLTYFTILLVLFP).

The protein belongs to the cytochrome b family. In terms of assembly, the cytochrome bc1 complex contains 11 subunits: 3 respiratory subunits (MT-CYB, CYC1 and UQCRFS1), 2 core proteins (UQCRC1 and UQCRC2) and 6 low-molecular weight proteins (UQCRH/QCR6, UQCRB/QCR7, UQCRQ/QCR8, UQCR10/QCR9, UQCR11/QCR10 and a cleavage product of UQCRFS1). This cytochrome bc1 complex then forms a dimer. It depends on heme b as a cofactor.

It localises to the mitochondrion inner membrane. Functionally, component of the ubiquinol-cytochrome c reductase complex (complex III or cytochrome b-c1 complex) that is part of the mitochondrial respiratory chain. The b-c1 complex mediates electron transfer from ubiquinol to cytochrome c. Contributes to the generation of a proton gradient across the mitochondrial membrane that is then used for ATP synthesis. The chain is Cytochrome b (MT-CYB) from Anthropoides virgo (Demoiselle crane).